A 199-amino-acid polypeptide reads, in one-letter code: Probable nicotinate-nucleotide adenylyltransferase (199 aa).

The protein belongs to the NadD family.

The catalysed reaction is nicotinate beta-D-ribonucleotide + ATP + H(+) = deamido-NAD(+) + diphosphate. Its pathway is cofactor biosynthesis; NAD(+) biosynthesis; deamido-NAD(+) from nicotinate D-ribonucleotide: step 1/1. Its function is as follows. Catalyzes the reversible adenylation of nicotinate mononucleotide (NaMN) to nicotinic acid adenine dinucleotide (NaAD). This is Probable nicotinate-nucleotide adenylyltransferase from Chloroherpeton thalassium (strain ATCC 35110 / GB-78).